We begin with the raw amino-acid sequence, 260 residues long: Cytosolic Fe-S cluster assembly factor Nubp2 homolog 1 (260 aa).

An ATP-binding site is contributed by 14–21 (GKGGVGKS). The [4Fe-4S] cluster site is built by cysteine 188 and cysteine 191.

This sequence belongs to the Mrp/NBP35 ATP-binding proteins family. NUBP2/CFD1 subfamily. Heterotetramer of 2 Nubp1 and 2 Nubp2 chains. It depends on [4Fe-4S] cluster as a cofactor.

Its subcellular location is the cytoplasm. In terms of biological role, component of the cytosolic iron-sulfur (Fe/S) protein assembly (CIA) machinery. Required for maturation of extramitochondrial Fe-S proteins. The Nubp1-Nubp2 heterotetramer forms a Fe-S scaffold complex, mediating the de novo assembly of an Fe-S cluster and its transfer to target apoproteins. The sequence is that of Cytosolic Fe-S cluster assembly factor Nubp2 homolog 1 from Drosophila yakuba (Fruit fly).